A 132-amino-acid chain; its full sequence is ATP synthase epsilon chain (132 aa).

It belongs to the ATPase epsilon chain family. As to quaternary structure, F-type ATPases have 2 components, CF(1) - the catalytic core - and CF(0) - the membrane proton channel. CF(1) has five subunits: alpha(3), beta(3), gamma(1), delta(1), epsilon(1). CF(0) has three main subunits: a, b and c.

Its subcellular location is the cell membrane. Its function is as follows. Produces ATP from ADP in the presence of a proton gradient across the membrane. The protein is ATP synthase epsilon chain of Brevibacillus brevis (strain 47 / JCM 6285 / NBRC 100599).